A 514-amino-acid polypeptide reads, in one-letter code: Membrane-bound lytic murein transglycosylase F (514 aa).

An N-terminal signal peptide occupies residues 1 to 30 (MKKLKINYLFIGILTLLLAAALWPSIPWFG). The tract at residues 31–269 (KTENHVAAIQ…RIEEKYLGHG (239 aa)) is non-LT domain. Positions 270 to 514 (DDFDYVDTRS…LFTPQKKEEK (245 aa)) are LT domain. Glu314 is a catalytic residue.

It in the N-terminal section; belongs to the bacterial solute-binding protein 3 family. This sequence in the C-terminal section; belongs to the transglycosylase Slt family.

The protein localises to the cell outer membrane. The catalysed reaction is Exolytic cleavage of the (1-&gt;4)-beta-glycosidic linkage between N-acetylmuramic acid (MurNAc) and N-acetylglucosamine (GlcNAc) residues in peptidoglycan, from either the reducing or the non-reducing ends of the peptidoglycan chains, with concomitant formation of a 1,6-anhydrobond in the MurNAc residue.. Functionally, murein-degrading enzyme that degrades murein glycan strands and insoluble, high-molecular weight murein sacculi, with the concomitant formation of a 1,6-anhydromuramoyl product. Lytic transglycosylases (LTs) play an integral role in the metabolism of the peptidoglycan (PG) sacculus. Their lytic action creates space within the PG sacculus to allow for its expansion as well as for the insertion of various structures such as secretion systems and flagella. This chain is Membrane-bound lytic murein transglycosylase F, found in Salmonella arizonae (strain ATCC BAA-731 / CDC346-86 / RSK2980).